A 476-amino-acid chain; its full sequence is Aspartyl/glutamyl-tRNA(Asn/Gln) amidotransferase subunit B (476 aa).

It belongs to the GatB/GatE family. GatB subfamily. In terms of assembly, heterotrimer of A, B and C subunits.

The catalysed reaction is L-glutamyl-tRNA(Gln) + L-glutamine + ATP + H2O = L-glutaminyl-tRNA(Gln) + L-glutamate + ADP + phosphate + H(+). It carries out the reaction L-aspartyl-tRNA(Asn) + L-glutamine + ATP + H2O = L-asparaginyl-tRNA(Asn) + L-glutamate + ADP + phosphate + 2 H(+). Its function is as follows. Allows the formation of correctly charged Asn-tRNA(Asn) or Gln-tRNA(Gln) through the transamidation of misacylated Asp-tRNA(Asn) or Glu-tRNA(Gln) in organisms which lack either or both of asparaginyl-tRNA or glutaminyl-tRNA synthetases. The reaction takes place in the presence of glutamine and ATP through an activated phospho-Asp-tRNA(Asn) or phospho-Glu-tRNA(Gln). This is Aspartyl/glutamyl-tRNA(Asn/Gln) amidotransferase subunit B from Listeria monocytogenes serovar 1/2a (strain ATCC BAA-679 / EGD-e).